A 149-amino-acid polypeptide reads, in one-letter code: Transcriptional repressor NrdR (149 aa).

A zinc finger spans residues 3 to 34 (CPFCFAVDTKVIDSRLVGGGSSVRRRRQCLVC). In terms of domain architecture, ATP-cone spans 49–139 (PRVVKSNDVR…VYRSFEDIKE (91 aa)).

Belongs to the NrdR family. Requires Zn(2+) as cofactor.

Functionally, negatively regulates transcription of bacterial ribonucleotide reductase nrd genes and operons by binding to NrdR-boxes. In Shigella boydii serotype 18 (strain CDC 3083-94 / BS512), this protein is Transcriptional repressor NrdR.